Consider the following 776-residue polypeptide: Cullin-1 (776 aa).

At arginine 63 the chain carries Omega-N-methylarginine. A Cullin neddylation domain is found at 706-766; the sequence is DRKLLIQAAI…IEKEYLERVD (61 aa). Residue lysine 720 forms a Glycyl lysine isopeptide (Lys-Gly) (interchain with G-Cter in NEDD8) linkage.

Belongs to the cullin family. In terms of assembly, component of multiple Cul1-RING E3 ubiquitin-protein ligase complexes commonly known as SCF (SKP1-CUL1-F-box) complexes, consisting of CUL1, SKP1, RBX1 and a variable F-box domain-containing protein as substrate-specific subunit. Component of the SCF(FBXW11) complex containing FBXW11. Component of the SCF(SKP2) complex containing SKP2, in which it interacts directly with SKP1, SKP2 and RBX1. Component of the SCF(FBXW2) complex containing FBXW2. Component of the SCF(FBXO32) complex containing FBXO32. Component of the probable SCF(FBXO7) complex containing FBXO7. Component of the SCF(FBXO10) complex containing FBXO10. Component of the SCF(FBXO11) complex containing FBXO11. Component of the SCF(FBXO25) complex containing FBXO25. Component of the SCF(FBXO33) complex containing FBXO33. Component of the probable SCF(FBXO4) complex containing FBXO4. Component of the SCF(FBXO44) complex, composed of SKP1, CUL1 and FBXO44. Component of the SCF(BTRC) complex, composed of SKP1, CUL1 and BTRC. This complex binds phosphorylated NFKBIA. Part of a SCF complex consisting of CUL1, RBX1, SKP1 and FBXO2. Component of a SCF(SKP2)-like complex containing CUL1, SKP1, TRIM21 and SKP2. Component of the SCF(FBXO17) complex, composed of SKP1, CUL1 and FBXO17. Component of the SCF(FBXO27) complex, composed of SKP1, CUL1 and FBXO27. Component of the SCF(CCNF) complex consisting of CUL1, RBX1, SKP1 and CCNF. Interacts with CCNF. Component of the SCF(FBXL3) complex composed of CUL1, SKP1, RBX1 and FBXL3. Component of the SCF(FBXL21) complex composed of CUL1, SKP1, RBX1 and FBXL21. Component of the SCF(FBXO9) composed of CUL1, SKP1, RBX1 and FBXO9. Component of the SCF(FBXW7) composed of CUL1, SKP1, RBX1 and FBXW7. Component of the SCF(FBXO31) complex composed of CUL1, SKP1, RBX1 and FBXO31. Interacts with CHEK2; mediates CHEK2 ubiquitination and regulates its function. Part of a complex with TIP120A/CAND1 and RBX1. The unneddylated form interacts with TIP120A/CAND1 and the interaction mediates the exchange of the F-box substrate-specific subunit. Can self-associate. Interacts with FBXW8. Interacts with RNF7. Interacts with TRIM21. Interacts with COPS2. Interacts with UBE2M. Identified in a complex with RBX1 and GLMN. Interacts with CEP68 as part of the SCF(FBXW11) complex; the interaction is probably mediated by FBXW11 and the complex also contains CDK5RAP2 and PCNT. Interacts (when neddylated) with ARIH1; leading to activate the E3 ligase activity of ARIH1. Interacts with COPS9 isoform 2. Interacts with UBXN1. Interacts with KAT7, probably as part of an SCF complex; the interaction mediates KAT7 ubiquitination. Interacts with NOTCH2. Part of a complex that contains DCUN1D5, CUL1 and RBX1; this complex is bridged by CUL1. Interacts (unneddylated form) with DCUN1D1, DCUN1D2, DCUN1D3, DCUN1D4 and DCUN1D5; these interactions promote the cullin neddylation. Interacts (via the C-terminal domain) with CUL7; the interaction seems to be mediated by FBXW8; it is likely specific to FBXW8, but not other F-box proteins. Interacts with UBR2, as part of SCF(BTRC) complex; the interaction mediates 'Lys-48'-linked ubiquitination of UBR2 and is regulated by DUSP22 in the T-cell receptor signaling pathway. As to quaternary structure, (Microbial infection) Interacts with Epstein-Barr virus BPLF1. (Microbial infection) Interacts with Human adenovirus early E1A protein; this interaction inhibits RBX1-CUL1-dependent elongation reaction of ubiquitin chains by the SCF(FBXW7) complex. In terms of assembly, (Microbial infection) Interacts with vaccinia virus protein C9L. As to quaternary structure, (Microbial infection) Interacts with Epstein-Barr virus (EBV) tegument protein BGLF2; this interaction might facilitate CUL1 recruitment to STAT2, leading to ubiquitination and degradation of the latter. Neddylated; which enhances the ubiquitination activity of SCF. Neddylation prevents binding of the inhibitor CAND1. Neddylation leads to structural rearrangment in the complex that allows interaction between the E2 ubiquitin-conjugating enzyme and the acceptor ubiquitin. Deneddylated via its interaction with the COP9 signalosome (CSN) complex. Post-translationally, (Microbial infection) Deneddylated by Epstein-Barr virus BPLF1 leading to a S-phase-like environment that is required for efficient replication of the viral genome. Expressed in lung fibroblasts.

Its pathway is protein modification; protein ubiquitination. Its function is as follows. Core component of multiple cullin-RING-based SCF (SKP1-CUL1-F-box protein) E3 ubiquitin-protein ligase complexes, which mediate the ubiquitination of proteins involved in cell cycle progression, signal transduction and transcription. SCF complexes and ARIH1 collaborate in tandem to mediate ubiquitination of target proteins. In the SCF complex, serves as a rigid scaffold that organizes the SKP1-F-box protein and RBX1 subunits. May contribute to catalysis through positioning of the substrate and the ubiquitin-conjugating enzyme. The E3 ubiquitin-protein ligase activity of the complex is dependent on the neddylation of the cullin subunit and exchange of the substrate recognition component is mediated by TIP120A/CAND1. The functional specificity of the SCF complex depends on the F-box protein as substrate recognition component. SCF(BTRC) and SCF(FBXW11) direct ubiquitination of CTNNB1 and participate in Wnt signaling. SCF(FBXW11) directs ubiquitination of phosphorylated NFKBIA. SCF(BTRC) directs ubiquitination of NFKBIB, NFKBIE, ATF4, SMAD3, SMAD4, CDC25A, FBXO5 and probably NFKB2. SCF(BTRC) and/or SCF(FBXW11) direct ubiquitination of CEP68. SCF(SKP2) directs ubiquitination of phosphorylated CDKN1B/p27kip and is involved in regulation of G1/S transition. SCF(SKP2) directs ubiquitination of ORC1, CDT1, RBL2, ELF4, CDKN1A, RAG2, FOXO1A, and probably MYC and TAL1. SCF(FBXW7) directs ubiquitination of CCNE1, NOTCH1 released notch intracellular domain (NICD), and probably PSEN1. SCF(FBXW2) directs ubiquitination of GCM1. SCF(FBXO32) directs ubiquitination of MYOD1. SCF(FBXO7) directs ubiquitination of BIRC2 and DLGAP5. SCF(FBXO33) directs ubiquitination of YBX1. SCF(FBXO1) directs ubiquitination of BCL6 and DTL but does not seem to direct ubiquitination of TP53. SCF(BTRC) mediates the ubiquitination of NFKBIA at 'Lys-21' and 'Lys-22'; the degradation frees the associated NFKB1-RELA dimer to translocate into the nucleus and to activate transcription. SCF(CCNF) directs ubiquitination of CCP110. SCF(FBXL3) and SCF(FBXL21) direct ubiquitination of CRY1 and CRY2. SCF(FBXO9) directs ubiquitination of TTI1 and TELO2. SCF(FBXO10) directs ubiquitination of BCL2. Neddylated CUL1-RBX1 ubiquitinates p53/TP53 recruited by Cul7-RING(FBXW8) complex. SCF(BTRC) directs 'Lys-48'-linked ubiquitination of UBR2 in the T-cell receptor signaling pathway. The SCF(FBXO31) protein ligase complex specifically mediates the ubiquitination of proteins amidated at their C-terminus in response to oxidative stress. The sequence is that of Cullin-1 (CUL1) from Homo sapiens (Human).